The following is a 110-amino-acid chain: Mite allergen Lep d 5 (110 aa).

Belongs to the mite group 5 allergen family.

This chain is Mite allergen Lep d 5, found in Lepidoglyphus destructor (Storage mite).